Reading from the N-terminus, the 276-residue chain is Large ribosomal subunit protein uL2 (276 aa).

Disordered stretches follow at residues 37–59 (QFQK…GGHK) and 225–276 (VMNP…RHKR). Polar residues predominate over residues 39–49 (QKSGRNNNGHI). The segment covering 50–59 (TTRHKGGGHK) has biased composition (basic residues).

Belongs to the universal ribosomal protein uL2 family. Part of the 50S ribosomal subunit. Forms a bridge to the 30S subunit in the 70S ribosome.

Functionally, one of the primary rRNA binding proteins. Required for association of the 30S and 50S subunits to form the 70S ribosome, for tRNA binding and peptide bond formation. It has been suggested to have peptidyltransferase activity; this is somewhat controversial. Makes several contacts with the 16S rRNA in the 70S ribosome. The polypeptide is Large ribosomal subunit protein uL2 (Cupriavidus pinatubonensis (strain JMP 134 / LMG 1197) (Cupriavidus necator (strain JMP 134))).